We begin with the raw amino-acid sequence, 26 residues long: Citropin-2.1.3 (26 aa).

Expressed by the dorsal and submental skin glands.

The protein localises to the secreted. The chain is Citropin-2.1.3 from Ranoidea citropa (Australian Blue Mountains tree frog).